The primary structure comprises 243 residues: Ribosomal RNA small subunit methyltransferase E 2 (243 aa).

The protein belongs to the RNA methyltransferase RsmE family.

The protein resides in the cytoplasm. It catalyses the reaction uridine(1498) in 16S rRNA + S-adenosyl-L-methionine = N(3)-methyluridine(1498) in 16S rRNA + S-adenosyl-L-homocysteine + H(+). Functionally, specifically methylates the N3 position of the uracil ring of uridine 1498 (m3U1498) in 16S rRNA. Acts on the fully assembled 30S ribosomal subunit. This chain is Ribosomal RNA small subunit methyltransferase E 2 (rsmE2), found in Borreliella burgdorferi (strain ATCC 35210 / DSM 4680 / CIP 102532 / B31) (Borrelia burgdorferi).